We begin with the raw amino-acid sequence, 321 residues long: tRNA U34 carboxymethyltransferase (321 aa).

Residues K90, W104, K109, G129, 151–153, 180–181, M195, Y199, and R314 each bind carboxy-S-adenosyl-L-methionine; these read DPT and IE.

Belongs to the class I-like SAM-binding methyltransferase superfamily. CmoB family. In terms of assembly, homotetramer.

The catalysed reaction is carboxy-S-adenosyl-L-methionine + 5-hydroxyuridine(34) in tRNA = 5-carboxymethoxyuridine(34) in tRNA + S-adenosyl-L-homocysteine + H(+). Catalyzes carboxymethyl transfer from carboxy-S-adenosyl-L-methionine (Cx-SAM) to 5-hydroxyuridine (ho5U) to form 5-carboxymethoxyuridine (cmo5U) at position 34 in tRNAs. This chain is tRNA U34 carboxymethyltransferase, found in Haemophilus influenzae (strain ATCC 51907 / DSM 11121 / KW20 / Rd).